The chain runs to 990 residues: Glycine dehydrogenase (decarboxylating) (990 aa).

At Lys726 the chain carries N6-(pyridoxal phosphate)lysine.

This sequence belongs to the GcvP family. As to quaternary structure, the glycine cleavage system is composed of four proteins: P, T, L and H. Pyridoxal 5'-phosphate is required as a cofactor.

The catalysed reaction is N(6)-[(R)-lipoyl]-L-lysyl-[glycine-cleavage complex H protein] + glycine + H(+) = N(6)-[(R)-S(8)-aminomethyldihydrolipoyl]-L-lysyl-[glycine-cleavage complex H protein] + CO2. Its function is as follows. The glycine cleavage system catalyzes the degradation of glycine. The P protein binds the alpha-amino group of glycine through its pyridoxal phosphate cofactor; CO(2) is released and the remaining methylamine moiety is then transferred to the lipoamide cofactor of the H protein. This is Glycine dehydrogenase (decarboxylating) from Rhodopseudomonas palustris (strain ATCC BAA-98 / CGA009).